We begin with the raw amino-acid sequence, 250 residues long: MGDYWLNEHDNIVKLINSLTADIKEYSIQQRNNPGIVQKNTPAKLRNGLVHITNEILRLQDSLTYGNNRNIQEKELLRRKNKVESLISMKNQLNSTLDAAINNTSQKNELMGNNNGVGIGYSNRQFGKPKETEATKQFDNQQLFTNQQHIMREQDESLDLLSQSIMRQKNMAHAMSNELDQHNEMLDDVEIGTDAVSMRLRNANRRMETIKQNAGSTCMIVCIVILIILIVVLIATDSGCKIYNDPKHCP.

Over 1–213 (MGDYWLNEHD…NRRMETIKQN (213 aa)) the chain is Cytoplasmic. The stretch at 73 to 100 (EKELLRRKNKVESLISMKNQLNSTLDAA) forms a coiled coil. Residues 148–210 (QHIMREQDES…RNANRRMETI (63 aa)) form the t-SNARE coiled-coil homology domain. A helical; Anchor for type IV membrane protein membrane pass occupies residues 214–234 (AGSTCMIVCIVILIILIVVLI). Residues 235-250 (ATDSGCKIYNDPKHCP) lie on the Vesicular side of the membrane.

This sequence belongs to the syntaxin family.

The protein resides in the membrane. The protein is Probable syntaxin-8B (syn8B) of Dictyostelium discoideum (Social amoeba).